Consider the following 378-residue polypeptide: Uroporphyrinogen decarboxylase (378 aa).

Substrate is bound by residues 40–44, Asp90, Tyr167, Ser222, and His355; that span reads RQAGR.

Belongs to the uroporphyrinogen decarboxylase family. Homodimer.

It localises to the cytoplasm. The catalysed reaction is uroporphyrinogen III + 4 H(+) = coproporphyrinogen III + 4 CO2. It functions in the pathway porphyrin-containing compound metabolism; protoporphyrin-IX biosynthesis; coproporphyrinogen-III from 5-aminolevulinate: step 4/4. Functionally, catalyzes the decarboxylation of four acetate groups of uroporphyrinogen-III to yield coproporphyrinogen-III. The chain is Uroporphyrinogen decarboxylase from Psychrobacter arcticus (strain DSM 17307 / VKM B-2377 / 273-4).